Here is a 326-residue protein sequence, read N- to C-terminus: Probable protein phosphatase 2C 61 (326 aa).

Residues 42 to 316 (LGSVSSLAGG…DDISVVCLSL (275 aa)) form the PPM-type phosphatase domain. The Mn(2+) site is built by D77, G78, D261, and D307.

Belongs to the PP2C family. Mg(2+) is required as a cofactor. The cofactor is Mn(2+).

The catalysed reaction is O-phospho-L-seryl-[protein] + H2O = L-seryl-[protein] + phosphate. The enzyme catalyses O-phospho-L-threonyl-[protein] + H2O = L-threonyl-[protein] + phosphate. The chain is Probable protein phosphatase 2C 61 from Arabidopsis thaliana (Mouse-ear cress).